A 408-amino-acid chain; its full sequence is Digeranylgeranylglycerophospholipid reductase 1 (408 aa).

A15, E34, C45, A46, G48, R99, V123, D279, G291, and I292 together coordinate FAD.

It belongs to the geranylgeranyl reductase family. DGGGPL reductase subfamily. It depends on FAD as a cofactor.

The catalysed reaction is a 2,3-bis-O-phytanyl-sn-glycerol 1-phospholipid + 8 oxidized 2[4Fe-4S]-[ferredoxin] = a 2,3-bis-O-(geranylgeranyl)-sn-glycerol 1-phospholipid + 8 reduced 2[4Fe-4S]-[ferredoxin] + 16 H(+). It carries out the reaction 2,3-bis-O-(phytanyl)-sn-glycerol 1-phosphate + 8 oxidized 2[4Fe-4S]-[ferredoxin] = 2,3-bis-O-(geranylgeranyl)-sn-glycerol 1-phosphate + 8 reduced 2[4Fe-4S]-[ferredoxin] + 16 H(+). The enzyme catalyses a 2,3-bis-O-phytanyl-sn-glycerol 1-phospholipid + 8 A = a 2,3-bis-O-(geranylgeranyl)-sn-glycerol 1-phospholipid + 8 AH2. It catalyses the reaction CDP-2,3-bis-O-(geranylgeranyl)-sn-glycerol + 8 AH2 = CDP-2,3-bis-O-(phytanyl)-sn-glycerol + 8 A. The catalysed reaction is archaetidylserine + 8 AH2 = 2,3-bis-O-phytanyl-sn-glycero-3-phospho-L-serine + 8 A. The protein operates within membrane lipid metabolism; glycerophospholipid metabolism. Functionally, is involved in the reduction of 2,3-digeranylgeranylglycerophospholipids (unsaturated archaeols) into 2,3-diphytanylglycerophospholipids (saturated archaeols) in the biosynthesis of archaeal membrane lipids. Catalyzes the formation of archaetidic acid (2,3-di-O-phytanyl-sn-glyceryl phosphate) from 2,3-di-O-geranylgeranylglyceryl phosphate (DGGGP) via the hydrogenation of each double bond of the isoprenoid chains. Is also probably able to reduce double bonds of geranyl groups in CDP-2,3-bis-O-(geranylgeranyl)-sn-glycerol and archaetidylserine, thus acting at various stages in the biosynthesis of archaeal membrane lipids. The sequence is that of Digeranylgeranylglycerophospholipid reductase 1 from Methanococcoides burtonii (strain DSM 6242 / NBRC 107633 / OCM 468 / ACE-M).